The sequence spans 269 residues: 5'-nucleotidase SurE (269 aa).

Asp11, Asp12, Ser43, and Asn101 together coordinate a divalent metal cation.

Belongs to the SurE nucleotidase family. It depends on a divalent metal cation as a cofactor.

The protein resides in the cytoplasm. The enzyme catalyses a ribonucleoside 5'-phosphate + H2O = a ribonucleoside + phosphate. In terms of biological role, nucleotidase that shows phosphatase activity on nucleoside 5'-monophosphates. The protein is 5'-nucleotidase SurE of Prochlorococcus marinus (strain AS9601).